The sequence spans 114 residues: uncharacterized protein (114 aa).

The disordered stretch occupies residues 1–24 (MFGACYKQPLKPSGSEPPAEECRM).

Expressed in kidney and liver.

This is an uncharacterized protein from Homo sapiens (Human).